A 76-amino-acid polypeptide reads, in one-letter code: Tautomerase PptA (76 aa).

P2 (proton acceptor; via imino nitrogen) is an active-site residue.

Belongs to the 4-oxalocrotonate tautomerase family. PptA subfamily. In terms of assembly, homodimer.

It is found in the cytoplasm. The polypeptide is Tautomerase PptA (Enterobacter sp. (strain 638)).